Here is a 355-residue protein sequence, read N- to C-terminus: Protein RecA (355 aa).

67 to 74 serves as a coordination point for ATP; sequence GPESSGKT. The tract at residues 336 to 355 is disordered; it reads NSAASDYEDNENEEMNNEEF. The segment covering 341–355 has biased composition (acidic residues); it reads DYEDNENEEMNNEEF.

It belongs to the RecA family.

It localises to the cytoplasm. Can catalyze the hydrolysis of ATP in the presence of single-stranded DNA, the ATP-dependent uptake of single-stranded DNA by duplex DNA, and the ATP-dependent hybridization of homologous single-stranded DNAs. It interacts with LexA causing its activation and leading to its autocatalytic cleavage. This chain is Protein RecA, found in Photorhabdus laumondii subsp. laumondii (strain DSM 15139 / CIP 105565 / TT01) (Photorhabdus luminescens subsp. laumondii).